Here is a 291-residue protein sequence, read N- to C-terminus: MKRVFLFLITNLAVILVLSFSARLLGVDRFLTSNGLDLGMLLAFAALIGFGGSFISLLMSKTMAKWSTGARVILRASNEDESWLLNTVRQLSKKADLAMPEVAIYEGAPNAFATGPSRSKSLVAVSSGLLRSMDRKQVEAVLAHEVAHIQNGDMVTLTLIQGVVNTFVIFLARVFAYALDSFLRRDEDESGSPGIGYWISSIAFEIVFGILASIVVMYFSRKREFRADAGAAALIGDRRPMIEALRALGSIDAGKLPKEMAASGIAGGGMMALFSSHPPLESRIAALESAR.

2 helical membrane passes run 4–24 (VFLF…SARL) and 38–58 (LGML…ISLL). His-144 provides a ligand contact to Zn(2+). The active site involves Glu-145. His-148 provides a ligand contact to Zn(2+). 2 helical membrane passes run 159–179 (LIQG…AYAL) and 199–219 (ISSI…VMYF). Glu-224 provides a ligand contact to Zn(2+).

It belongs to the peptidase M48B family. The cofactor is Zn(2+).

The protein resides in the cell inner membrane. This is Protease HtpX homolog from Chlorobium luteolum (strain DSM 273 / BCRC 81028 / 2530) (Pelodictyon luteolum).